Consider the following 255-residue polypeptide: MVIGVFPAAKLGILAIKQVSKPIANVIKSNAKSSPFFRKYICMPPAQFYNWVEVKTKMWALNMGGRVNVPPLNEAMAIELGANLLGEFIIFSIGAGLLIFEYSRQTIKENKKNELAQSEKMELTNMLTEMNFRLERQDAQIREMTRVLADLDSRNIFRWHKEPIQEYVPFDPDTPDQSASARNPKKFDSLYDPQGGMAFRALHFLDTQIFVDGRNRKAKEALQHLDEVAVQLEQSLGEAATVAVASSLPTKAADL.

A coiled-coil region spans residues 108-154 (KENKKNELAQSEKMELTNMLTEMNFRLERQDAQIREMTRVLADLDSR). A disordered region spans residues 168–187 (VPFDPDTPDQSASARNPKKF). Residues 212 to 241 (DGRNRKAKEALQHLDEVAVQLEQSLGEAAT) are a coiled coil.

This sequence belongs to the OPA3 family.

The chain is Putative OPA3-like protein CG13603 from Drosophila melanogaster (Fruit fly).